The following is a 459-amino-acid chain: Protein maelstrom (459 aa).

The segment at residues 2–69 (APKKHSGFMM…AQRAKRESSN (68 aa)) is a DNA-binding region (HMG box). Residues 43 to 78 (NTQQRGPYNSGGKDANVAQRAKRESSNGHGQVDKAQ) are disordered. Over residues 63–78 (AKRESSNGHGQVDKAQ) the composition is skewed to basic and acidic residues.

This sequence belongs to the maelstrom family. In germaria and egg chambers, it is detected in the germline. In the germarium, it is in all regions, including region I where the germ cells are dividing. In early egg chambers, it is uniformly distributed throughout the nurse cells and oocyte but, by stage 5, it is most concentrated around the outer margins of the cells, closest to the periphery of the egg chamber. Level decreases in stages 5 and 6, but most noticeably in the oocyte, where protein level remains. No detectable protein from stage 8 onward (at protein level).

The protein resides in the cytoplasm. Its subcellular location is the nucleus. It is found in the perinuclear region. The protein localises to the cytoplasmic ribonucleoprotein granule. Functionally, involved both in the piRNA and miRNA metabolic processes. As a component of the meiotic nuage, plays a central role during oogenesis by repressing transposable elements and preventing their mobilization, which is essential for the germline integrity. Repression of transposable elements is mediated via the piRNA metabolic process, which mediates the repression of transposable elements during meiosis by forming complexes composed of piRNAs and Piwi proteins and governs the repression of transposons. As a nuclear component, it is required for proper differentiation in the germline stem cell (GSC) lineage by repressing microRNA-7 (miR-7), thereby acting as an indirect regulator of bag-of-marbles (Bam). Acts by binding to the promoter of miR-7 gene and repressing its expression; miR-7 repression alleviates the Bam repression by miR-7, thereby allowing differentiation in the germline stem cell (GSC) lineage. Indirectly required to position the microtubule organizing center in stage 2-6 oocytes. Involved in repression of long interspersed nuclear elements (LINEs) including HeT-A, I-element, TART and possibly mst40 LINEs; may have a role in production of piwi-interacting RNA (piRNA). The sequence is that of Protein maelstrom from Drosophila melanogaster (Fruit fly).